Consider the following 336-residue polypeptide: Transmembrane protein 120A (336 aa).

Topologically, residues Met-1–Glu-131 are cytoplasmic. Lys-129 contacts CoA. The helical transmembrane segment at Tyr-132–Arg-151 threads the bilayer. Over Phe-152 to Arg-157 the chain is Extracellular. Residues Val-158 to Ile-176 form a helical membrane-spanning segment. Residues Arg-177 to Lys-189 are Cytoplasmic-facing. CoA-binding residues include Ser-186 and Arg-187. A helical transmembrane segment spans residues Gly-190 to Thr-208. The Extracellular portion of the chain corresponds to Trp-209–Met-217. A helical membrane pass occupies residues Phe-218–Tyr-239. Residues Gln-236, Tyr-239, and Gln-240 each contribute to the CoA site. Topologically, residues Gln-240–Arg-269 are cytoplasmic. Residues Gly-270–Phe-293 traverse the membrane as a helical segment. The Extracellular segment spans residues Lys-294 to Glu-303. Residues Trp-304–His-329 form a helical membrane-spanning segment. The Cytoplasmic portion of the chain corresponds to Gln-330 to Asn-336. A CoA-binding site is contributed by Lys-331.

It belongs to the TMEM120 family. In terms of assembly, homodimer.

Its subcellular location is the cell membrane. The protein resides in the nucleus inner membrane. It localises to the endoplasmic reticulum. Multifunctional protein involved in mechanosensation, and plays an essential role in lipid metabolism. May function as a potential ion channel involved in sensing mechanical stimuli. TMEM120A is structurally similar to a lipid-modifying enzyme, ELOVL7, and contains a bound coenzyme A molecule, which suggests it might function as an enzyme in lipid metabolism. This Xenopus tropicalis (Western clawed frog) protein is Transmembrane protein 120A.